We begin with the raw amino-acid sequence, 370 residues long: Homospermidine synthase 2 (370 aa).

The protein belongs to the deoxyhypusine synthase family. As to quaternary structure, homotetramer. The cofactor is NAD(+). Post-translationally, the N-terminus is blocked. As to expression, expressed in roots.

The enzyme catalyses putrescine + spermidine = sym-homospermidine + propane-1,3-diamine. Its pathway is alkaloid biosynthesis; pyrrolizidine alkaloid biosynthesis. Functionally, catalyzes the transfer of an aminobutyl unit from spermidine onto putrescine. The resulting polyamine homospermidine is a precursor in the biosynthesis of pyrrolizidine alkaloids. The protein is Homospermidine synthase 2 of Senecio vernalis (Spring groundsel).